Consider the following 292-residue polypeptide: ATP phosphoribosyltransferase (292 aa).

The protein belongs to the ATP phosphoribosyltransferase family. Long subfamily. Mg(2+) serves as cofactor.

The protein localises to the cytoplasm. The enzyme catalyses 1-(5-phospho-beta-D-ribosyl)-ATP + diphosphate = 5-phospho-alpha-D-ribose 1-diphosphate + ATP. Its pathway is amino-acid biosynthesis; L-histidine biosynthesis; L-histidine from 5-phospho-alpha-D-ribose 1-diphosphate: step 1/9. With respect to regulation, feedback inhibited by histidine. Functionally, catalyzes the condensation of ATP and 5-phosphoribose 1-diphosphate to form N'-(5'-phosphoribosyl)-ATP (PR-ATP). Has a crucial role in the pathway because the rate of histidine biosynthesis seems to be controlled primarily by regulation of HisG enzymatic activity. The chain is ATP phosphoribosyltransferase from Gemmatimonas aurantiaca (strain DSM 14586 / JCM 11422 / NBRC 100505 / T-27).